Here is a 376-residue protein sequence, read N- to C-terminus: Chaperone protein DnaJ (376 aa).

The 66-residue stretch at D5–G70 folds into the J domain. The CR-type zinc-finger motif lies at G137–E215. The Zn(2+) site is built by C150, C153, C167, C170, C189, C192, C203, and C206. CXXCXGXG motif repeat units lie at residues C150–G157, C167–G174, C189–G196, and C203–G210.

The protein belongs to the DnaJ family. Homodimer. It depends on Zn(2+) as a cofactor.

The protein localises to the cytoplasm. Its function is as follows. Participates actively in the response to hyperosmotic and heat shock by preventing the aggregation of stress-denatured proteins and by disaggregating proteins, also in an autonomous, DnaK-independent fashion. Unfolded proteins bind initially to DnaJ; upon interaction with the DnaJ-bound protein, DnaK hydrolyzes its bound ATP, resulting in the formation of a stable complex. GrpE releases ADP from DnaK; ATP binding to DnaK triggers the release of the substrate protein, thus completing the reaction cycle. Several rounds of ATP-dependent interactions between DnaJ, DnaK and GrpE are required for fully efficient folding. Also involved, together with DnaK and GrpE, in the DNA replication of plasmids through activation of initiation proteins. The polypeptide is Chaperone protein DnaJ (Rhizobium leguminosarum bv. trifolii (strain WSM2304)).